Reading from the N-terminus, the 1404-residue chain is DNA-directed RNA polymerase subunit beta' (1404 aa).

The Zn(2+) site is built by C70, C72, C85, and C88. D460, D462, and D464 together coordinate Mg(2+). Zn(2+) is bound by residues C814, C888, C895, and C898.

Belongs to the RNA polymerase beta' chain family. The RNAP catalytic core consists of 2 alpha, 1 beta, 1 beta' and 1 omega subunit. When a sigma factor is associated with the core the holoenzyme is formed, which can initiate transcription. It depends on Mg(2+) as a cofactor. Zn(2+) is required as a cofactor.

The enzyme catalyses RNA(n) + a ribonucleoside 5'-triphosphate = RNA(n+1) + diphosphate. DNA-dependent RNA polymerase catalyzes the transcription of DNA into RNA using the four ribonucleoside triphosphates as substrates. The protein is DNA-directed RNA polymerase subunit beta' of Shewanella amazonensis (strain ATCC BAA-1098 / SB2B).